Reading from the N-terminus, the 631-residue chain is ATP-dependent RNA helicase mrh4, mitochondrial (631 aa).

Residues Met-1–Arg-45 constitute a mitochondrion transit peptide. The tract at residues Lys-68–Pro-111 is disordered. Basic and acidic residues predominate over residues Arg-98–Lys-108. Positions Thr-141 to Arg-174 match the Q motif motif. Positions Leu-180–Ala-193 are enriched in basic and acidic residues. A disordered region spans residues Leu-180–Gln-199. The Helicase ATP-binding domain occupies Asp-194–Leu-406. Residue Ala-207 to Thr-214 coordinates ATP. The segment at Glu-229–Glu-249 is disordered. The short motif at Asp-353–Asp-356 is the DEAD box element. The Helicase C-terminal domain maps to Gly-455–Ile-631.

Belongs to the DEAD box helicase family. MRH4 subfamily.

It localises to the mitochondrion. It catalyses the reaction ATP + H2O = ADP + phosphate + H(+). Functionally, ATP-binding RNA helicase involved in mitochondrial RNA metabolism. Required for maintenance of mitochondrial DNA. This chain is ATP-dependent RNA helicase mrh4, mitochondrial (mrh4), found in Neosartorya fischeri (strain ATCC 1020 / DSM 3700 / CBS 544.65 / FGSC A1164 / JCM 1740 / NRRL 181 / WB 181) (Aspergillus fischerianus).